We begin with the raw amino-acid sequence, 862 residues long: Short transient receptor potential channel 7 (862 aa).

The interval 1–21 (MLRNSTFKNMQRRHTTLREKG) is disordered. Topologically, residues 1-351 (MLRNSTFKNM…GLRQQSIAVK (351 aa)) are cytoplasmic. Basic residues predominate over residues 10–21 (MQRRHTTLREKG). T15 bears the Phosphothreonine; by PKG/PRKG1 mark. 4 ANK repeats span residues 42–71 (PEEERFLDSAEYGNIPVVRKMLEESKTLNF), 77–106 (MGQNALQLAVGNEHLEVTELLLKKENLARV), 108–134 (DALLLAISKGYVRIVEAILNHPAFAQG), and 163–192 (HDITPIILAAHCQEYEIVHILLLKGARIER). The chain crosses the membrane as a helical span at residues 352–372 (FLAVFGVSIGLPFLAIAYWIA). Topologically, residues 373-383 (PCSKLGRTLRS) are extracellular. Residues 384–404 (PFMKFVAHAVSFTIFLGLLVV) form a helical membrane-spanning segment. Residues 405 to 465 (NASDRFEGVK…KEIWEEGPRE (61 aa)) lie on the Cytoplasmic side of the membrane. Residues 466-486 (YVLHLWNLLDFGMLSIFVASF) traverse the membrane as a helical segment. The Extracellular segment spans residues 487–537 (TARFMAFLKATEAQLYVDQHVQDDTLHNVSLPPEVAYFTYARDKWWPSDPQ). The N-linked (GlcNAc...) asparagine glycan is linked to N514. Residues 538-558 (IISEGLYAIAVVLSFSRIAYI) form a helical membrane-spanning segment. The Cytoplasmic segment spans residues 559 to 581 (LPANESFGPLQISLGRTVKDIFK). Residues 582–602 (FMVIFIMVFVAFMIGMFNLYS) form a helical membrane-spanning segment. Over 603-651 (YYRGAKYNPAFTTVEESFKTLFWSIFGLSEVISVVLKYDHKFIENIGYV) the chain is Extracellular. Residues 652–672 (LYGVYNVTMVVVLLNMLIAMI) form a helical membrane-spanning segment. Topologically, residues 673 to 862 (NNSYQEIEED…HLRVNKGKDI (190 aa)) are cytoplasmic.

This sequence belongs to the transient receptor (TC 1.A.4) family. STrpC subfamily. TRPC7 sub-subfamily. In terms of assembly, interacts with MX1 and RNF24. Interacts (via ANK-repeat domains) with PRKG1. In terms of processing, phosphorylation by PRKG1 at Thr-15 negatively regulates TRPC7 activity.

The protein localises to the cell membrane. The protein resides in the nucleus envelope. It carries out the reaction Ca(2+)(in) = Ca(2+)(out). Its function is as follows. Forms a receptor-activated non-selective calcium permeant cation channel. Probably is operated by a phosphatidylinositol second messenger system activated by receptor tyrosine kinases or G-protein coupled receptors. Activated by diacylglycerol (DAG). May also be activated by intracellular calcium store depletion. This is Short transient receptor potential channel 7 (TRPC7) from Homo sapiens (Human).